We begin with the raw amino-acid sequence, 351 residues long: MFCLLGLRLLKYITFRTAYATIFAFLLALIFGPFIILRLKKLKLDQILRKDGPKRHLSEKIGIPTMGGILIFFCVLVSLFFWIDFWNIYFLIILFVMVSFACLGFMDDLLKIKRKNSDGLNPRFKIYGQILFSCISVTMLYYFGDEHVSIIYFPFFKSLKLDLGVLYIPFGMFILISASNSFNLTDGLDGLAIGLSIVVTGALVIIAYLASRVDFAFYLNIPNIKGAEELVVFLGALLGGSFGFLWFNAYPAKIMMGDTGSLSIGAVLGMTALILKSEILFAILAGVFVVETLSVIIQVVVYKHTKKRVFKMAPLHHHFEELGWSEMQVVIRFWIIGLIFAIIALSTLKIR.

Transmembrane regions (helical) follow at residues 17 to 37 (TAYA…FIIL), 63 to 83 (IPTM…FFWI), 85 to 105 (FWNI…CLGF), 124 to 144 (FKIY…YYFG), 158 to 178 (SLKL…LISA), 190 to 210 (GLAI…AYLA), 230 to 250 (LVVF…FNAY), 254 to 274 (IMMG…TALI), 279 to 299 (ILFA…IIQV), and 328 to 348 (QVVI…LSTL).

The protein belongs to the glycosyltransferase 4 family. MraY subfamily. The cofactor is Mg(2+).

Its subcellular location is the cell inner membrane. The catalysed reaction is UDP-N-acetyl-alpha-D-muramoyl-L-alanyl-gamma-D-glutamyl-meso-2,6-diaminopimeloyl-D-alanyl-D-alanine + di-trans,octa-cis-undecaprenyl phosphate = di-trans,octa-cis-undecaprenyl diphospho-N-acetyl-alpha-D-muramoyl-L-alanyl-D-glutamyl-meso-2,6-diaminopimeloyl-D-alanyl-D-alanine + UMP. Its pathway is cell wall biogenesis; peptidoglycan biosynthesis. Functionally, catalyzes the initial step of the lipid cycle reactions in the biosynthesis of the cell wall peptidoglycan: transfers peptidoglycan precursor phospho-MurNAc-pentapeptide from UDP-MurNAc-pentapeptide onto the lipid carrier undecaprenyl phosphate, yielding undecaprenyl-pyrophosphoryl-MurNAc-pentapeptide, known as lipid I. The protein is Phospho-N-acetylmuramoyl-pentapeptide-transferase of Borrelia turicatae (strain 91E135).